The primary structure comprises 42 residues: Protein YmiD (42 aa).

The chain is Protein YmiD from Escherichia coli (strain K12).